A 213-amino-acid chain; its full sequence is Large ribosomal subunit protein uL1 (213 aa).

It belongs to the universal ribosomal protein uL1 family. As to quaternary structure, part of the 50S ribosomal subunit.

Functionally, binds directly to 23S rRNA. Probably involved in E site tRNA release. In terms of biological role, protein L1 is also a translational repressor protein, it controls the translation of its operon by binding to its mRNA. This is Large ribosomal subunit protein uL1 from Methanococcus voltae.